We begin with the raw amino-acid sequence, 159 residues long: 2-C-methyl-D-erythritol 2,4-cyclodiphosphate synthase (159 aa).

The a divalent metal cation site is built by Asp-10 and His-12. Residues 10–12 (DVH) and 37–38 (HS) each bind 4-CDP-2-C-methyl-D-erythritol 2-phosphate. His-45 is a binding site for a divalent metal cation. 4-CDP-2-C-methyl-D-erythritol 2-phosphate-binding positions include 59 to 61 (DIG), 64 to 68 (FLDTD), 103 to 109 (AQAPKML), 135 to 138 (TTTE), Phe-142, and Arg-145.

It belongs to the IspF family. In terms of assembly, homotrimer. A divalent metal cation is required as a cofactor.

It carries out the reaction 4-CDP-2-C-methyl-D-erythritol 2-phosphate = 2-C-methyl-D-erythritol 2,4-cyclic diphosphate + CMP. Its pathway is isoprenoid biosynthesis; isopentenyl diphosphate biosynthesis via DXP pathway; isopentenyl diphosphate from 1-deoxy-D-xylulose 5-phosphate: step 4/6. Functionally, involved in the biosynthesis of isopentenyl diphosphate (IPP) and dimethylallyl diphosphate (DMAPP), two major building blocks of isoprenoid compounds. Catalyzes the conversion of 4-diphosphocytidyl-2-C-methyl-D-erythritol 2-phosphate (CDP-ME2P) to 2-C-methyl-D-erythritol 2,4-cyclodiphosphate (ME-CPP) with a corresponding release of cytidine 5-monophosphate (CMP). This is 2-C-methyl-D-erythritol 2,4-cyclodiphosphate synthase from Francisella tularensis subsp. holarctica (strain OSU18).